The sequence spans 256 residues: Enolase-phosphatase E1 (256 aa).

The Mg(2+) site is built by D14 and E16. Substrate contacts are provided by residues 142 to 143 (SS) and K176. A Mg(2+)-binding site is contributed by D201.

Belongs to the HAD-like hydrolase superfamily. MasA/MtnC family. As to quaternary structure, monomer. Requires Mg(2+) as cofactor.

The protein localises to the cytoplasm. It is found in the nucleus. The catalysed reaction is 5-methylsulfanyl-2,3-dioxopentyl phosphate + H2O = 1,2-dihydroxy-5-(methylsulfanyl)pent-1-en-3-one + phosphate. It functions in the pathway amino-acid biosynthesis; L-methionine biosynthesis via salvage pathway; L-methionine from S-methyl-5-thio-alpha-D-ribose 1-phosphate: step 3/6. Its pathway is amino-acid biosynthesis; L-methionine biosynthesis via salvage pathway; L-methionine from S-methyl-5-thio-alpha-D-ribose 1-phosphate: step 4/6. Functionally, bifunctional enzyme that catalyzes the enolization of 2,3-diketo-5-methylthiopentyl-1-phosphate (DK-MTP-1-P) into the intermediate 2-hydroxy-3-keto-5-methylthiopentenyl-1-phosphate (HK-MTPenyl-1-P), which is then dephosphorylated to form the acireductone 1,2-dihydroxy-3-keto-5-methylthiopentene (DHK-MTPene). In Drosophila erecta (Fruit fly), this protein is Enolase-phosphatase E1.